Consider the following 429-residue polypeptide: ETS domain-containing protein Elk-1 (429 aa).

Residues 5-86 (VTLWQFLLQL…SGQKFVYKFV (82 aa)) constitute a DNA-binding region (ETS). Disordered stretches follow at residues 119–146 (HAGPGDTATGKPGTPKGAGMTGQGGLAR), 165–204 (SLQPQPQPPIPPRPASVLPNTTPAGVPAPASGSRSTSPNP), and 227–253 (APNQKSEELSLDPSFGHPQPPEVKVEG). The segment covering 169-178 (QPQPPIPPRP) has biased composition (pro residues). Glycyl lysine isopeptide (Lys-Gly) (interchain with G-Cter in SUMO) cross-links involve residues Lys-231, Lys-250, and Lys-255. A compositionally biased stretch (polar residues) spans 302-312 (STSTTEITQPQ). The disordered stretch occupies residues 302-354 (STSTTEITQPQKGRKPRDLELPLSPSLLGGQGPERTPGSGTSSGLQAPGPALT). Ser-325 carries the post-translational modification Phosphoserine; by MAPK1. Thr-337, Thr-354, Thr-364, and Thr-369 each carry phosphothreonine; by MAPK1. The interval 350 to 400 (GPALTPSLLPTHTLTPVLLTPSSLPPSIHFWSTLSPIAPRSPAKLSFQFPS) is sufficient for interaction with MAD2L2. An O-linked (GlcNAc) threonine glycan is attached at Thr-382. A Phosphoserine; by MAPK1 and MAPK8 modification is found at Ser-384. A Phosphoserine; by MAPK1 modification is found at Ser-390. Phosphothreonine; by MAPK1 is present on Thr-418. Ser-423 carries the post-translational modification Phosphoserine; by MAPK1.

Belongs to the ETS family. Interacts in its sumoylated form with PIAS2/PIASX which enhances its transcriptional activator activity. Interacts with MAD2L2; the interaction is direct and promotes phosphorylation by the kinases MAPK8 and/or MAPK9. Interacts with POU1F1. Post-translationally, sumoylation represses transcriptional activator activity as it results in recruitment of HDAC2 to target gene promoters which leads to decreased histone acetylation and reduced transactivator activity. It also regulates nuclear retention. In terms of processing, on mitogenic stimulation, phosphorylated on C-terminal serine and threonine residues by MAPK1 but also MAPK8 and/or MAPK9. Phosphorylation leads to loss of sumoylation and restores transcriptional activator activity. Phosphorylated and activated by CaMK4, MAPK11, MAPK12 and MAPK14. Upon bFGF stimulus, phosphorylated by PAK1. Phosphorylated by PRP4K at Thr-418; phosphorylation activation ELK1 transcriptional activity. Predominantly expressed in the brain, and to a lesser extent in the heart, liver and muscle.

It is found in the nucleus. In terms of biological role, transcription factor that binds to purine-rich DNA sequences. Forms a ternary complex with SRF and the ETS and SRF motifs of the serum response element (SRE) on the promoter region of immediate early genes such as FOS and IER2. Induces target gene transcription upon JNK and MAPK-signaling pathways stimulation. The protein is ETS domain-containing protein Elk-1 of Mus musculus (Mouse).